Reading from the N-terminus, the 484-residue chain is tRNA sulfurtransferase (484 aa).

In terms of domain architecture, THUMP spans 63-167 (REMIERLTCT…DQRLYVIHNQ (105 aa)). ATP contacts are provided by residues 185–186 (LM), Lys267, Gly289, and Gln298. Cysteines 346 and 457 form a disulfide. The Rhodanese domain occupies 405–483 (ALPGQIVIDI…GHANVRVYRP (79 aa)). Residue Cys457 is the Cysteine persulfide intermediate of the active site.

Belongs to the ThiI family.

The protein resides in the cytoplasm. It carries out the reaction [ThiI sulfur-carrier protein]-S-sulfanyl-L-cysteine + a uridine in tRNA + 2 reduced [2Fe-2S]-[ferredoxin] + ATP + H(+) = [ThiI sulfur-carrier protein]-L-cysteine + a 4-thiouridine in tRNA + 2 oxidized [2Fe-2S]-[ferredoxin] + AMP + diphosphate. The catalysed reaction is [ThiS sulfur-carrier protein]-C-terminal Gly-Gly-AMP + S-sulfanyl-L-cysteinyl-[cysteine desulfurase] + AH2 = [ThiS sulfur-carrier protein]-C-terminal-Gly-aminoethanethioate + L-cysteinyl-[cysteine desulfurase] + A + AMP + 2 H(+). It participates in cofactor biosynthesis; thiamine diphosphate biosynthesis. Its function is as follows. Catalyzes the ATP-dependent transfer of a sulfur to tRNA to produce 4-thiouridine in position 8 of tRNAs, which functions as a near-UV photosensor. Also catalyzes the transfer of sulfur to the sulfur carrier protein ThiS, forming ThiS-thiocarboxylate. This is a step in the synthesis of thiazole, in the thiamine biosynthesis pathway. The sulfur is donated as persulfide by IscS. The sequence is that of tRNA sulfurtransferase from Pseudomonas putida (strain ATCC 47054 / DSM 6125 / CFBP 8728 / NCIMB 11950 / KT2440).